Reading from the N-terminus, the 273-residue chain is MTEISIATSVPSAMPPIGAQPDGPAKVTVRDLNFYYGQNHALKHINLALATNRVTAFIGPSGCGKSTLLRIFNRMYDLYPGQRAEGQVLLDNANILDPKLDLNLLRARVGMVFQKPTPFPMTIYENIAFGVRLYEKISKSEMDGRVEKALRGAALWNEVKDKLNASGLSLSGGQQQRLCIARTIAVRPEVILFDEPCSALDPISTAKIEELIDELKEQYTIAIVTHNMQQAARVSESTAFMYLGELIEFGPTNKIFTSPSDRRTQDYITGRFG.

The ABC transporter domain maps to V27–I268. Residue G59–S66 coordinates ATP.

Belongs to the ABC transporter superfamily. Phosphate importer (TC 3.A.1.7) family. As to quaternary structure, the complex is composed of two ATP-binding proteins (PstB), two transmembrane proteins (PstC and PstA) and a solute-binding protein (PstS).

The protein resides in the cell inner membrane. The catalysed reaction is phosphate(out) + ATP + H2O = ADP + 2 phosphate(in) + H(+). Part of the ABC transporter complex PstSACB involved in phosphate import. Responsible for energy coupling to the transport system. The protein is Phosphate import ATP-binding protein PstB of Rhodopseudomonas palustris (strain ATCC BAA-98 / CGA009).